The chain runs to 178 residues: uncharacterized protein (178 aa).

5 helical membrane-spanning segments follow: residues 1–21 (MISI…YGGG), 47–67 (MLAL…AYVG), 75–95 (GFLI…IVLL), 117–137 (VIAV…IKAI), and 158–178 (MHPA…IPYL).

It belongs to the chromate ion transporter (CHR) (TC 2.A.51) family.

The protein localises to the cell membrane. This is an uncharacterized protein from Bacillus subtilis (strain 168).